A 416-amino-acid chain; its full sequence is D-amino acid dehydrogenase (416 aa).

Valine 3–tyrosine 17 serves as a coordination point for FAD.

It belongs to the DadA oxidoreductase family. Requires FAD as cofactor.

The catalysed reaction is a D-alpha-amino acid + A + H2O = a 2-oxocarboxylate + AH2 + NH4(+). It participates in amino-acid degradation; D-alanine degradation; NH(3) and pyruvate from D-alanine: step 1/1. Its function is as follows. Oxidative deamination of D-amino acids. This is D-amino acid dehydrogenase from Rhizobium rhizogenes (strain K84 / ATCC BAA-868) (Agrobacterium radiobacter).